The primary structure comprises 684 residues: Probable phosphoenolpyruvate synthase (684 aa).

Histidine 424 (tele-phosphohistidine intermediate) is an active-site residue. The substrate site is built by arginine 517, arginine 564, and glutamate 661. Glutamate 661 contributes to the Mg(2+) binding site.

This sequence belongs to the PEP-utilizing enzyme family. Mg(2+) serves as cofactor.

The enzyme catalyses pyruvate + ATP + H2O = phosphoenolpyruvate + AMP + phosphate + 2 H(+). It functions in the pathway carbohydrate biosynthesis; gluconeogenesis. Catalyzes the phosphorylation of pyruvate to phosphoenolpyruvate. The protein is Probable phosphoenolpyruvate synthase (ppsA) of Methanothermobacter thermautotrophicus (strain ATCC 29096 / DSM 1053 / JCM 10044 / NBRC 100330 / Delta H) (Methanobacterium thermoautotrophicum).